The primary structure comprises 338 residues: MISLDGIRKVFKAKRGSVTAVDGVNLKINEGEIFGVIGYSGAGKSTLIRMLNMLERPTEGSVIVAGKDLSKLSDRDLRIERQKIGMIFQHFNLLWSRTVRKNIAFPLEIAGVPKKEREKRVDELINLVGLEGREEAYPSQLSGGQKQRVGIARALANNPKVLLCDEATSALDPKTTDSILDLLVDINEKLGLTIVLITHEMHVIRKICHRVAVMEAGKVVEEGPVLDVFRKPKEHITKEFVKQVTEPEETVQHLLNEVKSGRIVQLTFVGESAEKPLITNLIRTFAVDVNILQGKISKTQEGSYGTLFIHLDGPKDEIEKAITYMHEQQLELEVIAGA.

The region spanning 2–241 (ISLDGIRKVF…PKEHITKEFV (240 aa)) is the ABC transporter domain. 38 to 45 (GYSGAGKS) is an ATP binding site.

It belongs to the ABC transporter superfamily. Methionine importer (TC 3.A.1.24) family. The complex is composed of two ATP-binding proteins (MetN), two transmembrane proteins (MetI) and a solute-binding protein (MetQ).

It localises to the cell membrane. The enzyme catalyses L-methionine(out) + ATP + H2O = L-methionine(in) + ADP + phosphate + H(+). The catalysed reaction is D-methionine(out) + ATP + H2O = D-methionine(in) + ADP + phosphate + H(+). Part of the ABC transporter complex MetNIQ involved in methionine import. Responsible for energy coupling to the transport system. The protein is Methionine import ATP-binding protein MetN of Halalkalibacterium halodurans (strain ATCC BAA-125 / DSM 18197 / FERM 7344 / JCM 9153 / C-125) (Bacillus halodurans).